A 262-amino-acid chain; its full sequence is Adenosylcobinamide-GDP ribazoletransferase (262 aa).

6 helical membrane passes run 43 to 63 (YFGL…WLTQ), 66 to 86 (LPAG…TGGF), 120 to 140 (GALA…ELAL), 146 to 166 (AGSA…SIIF), 191 to 211 (LLIL…LAAL), and 242 to 262 (AAQQ…GNIL).

Belongs to the CobS family. It depends on Mg(2+) as a cofactor.

The protein resides in the cell inner membrane. The catalysed reaction is alpha-ribazole + adenosylcob(III)inamide-GDP = adenosylcob(III)alamin + GMP + H(+). The enzyme catalyses alpha-ribazole 5'-phosphate + adenosylcob(III)inamide-GDP = adenosylcob(III)alamin 5'-phosphate + GMP + H(+). Its pathway is cofactor biosynthesis; adenosylcobalamin biosynthesis; adenosylcobalamin from cob(II)yrinate a,c-diamide: step 7/7. Its function is as follows. Joins adenosylcobinamide-GDP and alpha-ribazole to generate adenosylcobalamin (Ado-cobalamin). Also synthesizes adenosylcobalamin 5'-phosphate from adenosylcobinamide-GDP and alpha-ribazole 5'-phosphate. In Shewanella baltica (strain OS195), this protein is Adenosylcobinamide-GDP ribazoletransferase.